Here is a 187-residue protein sequence, read N- to C-terminus: Potassium-transporting ATPase KdpC subunit (187 aa).

A helical transmembrane segment spans residues 10–30 (LVAATMLICVAGYSAAVWAVG).

Belongs to the KdpC family. As to quaternary structure, the system is composed of three essential subunits: KdpA, KdpB and KdpC.

It is found in the cell inner membrane. Part of the high-affinity ATP-driven potassium transport (or Kdp) system, which catalyzes the hydrolysis of ATP coupled with the electrogenic transport of potassium into the cytoplasm. This subunit acts as a catalytic chaperone that increases the ATP-binding affinity of the ATP-hydrolyzing subunit KdpB by the formation of a transient KdpB/KdpC/ATP ternary complex. This chain is Potassium-transporting ATPase KdpC subunit, found in Parvibaculum lavamentivorans (strain DS-1 / DSM 13023 / NCIMB 13966).